A 37-amino-acid polypeptide reads, in one-letter code: MEVNNLGFIAVLMFLAIPTAFLLIPYVKTASASSGSN.

A helical transmembrane segment spans residues 7 to 27; it reads GFIAVLMFLAIPTAFLLIPYV.

It belongs to the PsbM family. As to quaternary structure, PSII is composed of 1 copy each of membrane proteins PsbA, PsbB, PsbC, PsbD, PsbE, PsbF, PsbH, PsbI, PsbJ, PsbK, PsbL, PsbM, PsbT, PsbX, PsbY, PsbZ, Psb30/Ycf12, at least 3 peripheral proteins of the oxygen-evolving complex and a large number of cofactors. It forms dimeric complexes.

The protein resides in the plastid. It is found in the chloroplast thylakoid membrane. Functionally, one of the components of the core complex of photosystem II (PSII). PSII is a light-driven water:plastoquinone oxidoreductase that uses light energy to abstract electrons from H(2)O, generating O(2) and a proton gradient subsequently used for ATP formation. It consists of a core antenna complex that captures photons, and an electron transfer chain that converts photonic excitation into a charge separation. This subunit is found at the monomer-monomer interface. This Pinus koraiensis (Korean pine) protein is Photosystem II reaction center protein M.